The sequence spans 227 residues: RNA pyrophosphohydrolase (227 aa).

Residues 6-149 enclose the Nudix hydrolase domain; the sequence is GFRPNVGIIL…KRDVYQMALT (144 aa). Positions 38-59 match the Nudix box motif; sequence GGIKYGETPEQAMYRELHEEIG. The disordered stretch occupies residues 165–227; the sequence is PYGTHGAHGA…PVSTTRSTDD (63 aa). Low complexity predominate over residues 192-201; sequence AQAAQQADAD. Over residues 217–227 the composition is skewed to polar residues; it reads TPVSTTRSTDD.

It belongs to the Nudix hydrolase family. RppH subfamily. It depends on a divalent metal cation as a cofactor.

Functionally, accelerates the degradation of transcripts by removing pyrophosphate from the 5'-end of triphosphorylated RNA, leading to a more labile monophosphorylated state that can stimulate subsequent ribonuclease cleavage. The polypeptide is RNA pyrophosphohydrolase (Cupriavidus taiwanensis (strain DSM 17343 / BCRC 17206 / CCUG 44338 / CIP 107171 / LMG 19424 / R1) (Ralstonia taiwanensis (strain LMG 19424))).